A 335-amino-acid polypeptide reads, in one-letter code: Twinfilin (335 aa).

2 ADF-H domains span residues 4-140 (SSGI…QHKL) and 176-316 (GISF…NELH). A disordered region spans residues 307–335 (SEESIINELHPPKVEEKKAFSKPSRPGRK). Basic and acidic residues predominate over residues 316–325 (HPPKVEEKKA).

Belongs to the actin-binding proteins ADF family. Twinfilin subfamily. As to quaternary structure, interacts with G-actin; ADP-actin form.

The protein localises to the cytoplasm. The protein resides in the cytoskeleton. Its subcellular location is the cell cortex. In terms of biological role, actin-binding protein involved in motile and morphological processes. Inhibits actin polymerization, likely by sequestering G-actin. The sequence is that of Twinfilin (twfA) from Dictyostelium discoideum (Social amoeba).